The primary structure comprises 701 residues: Sodium/hydrogen exchanger 6 (701 aa).

The next 2 helical transmembrane spans lie at 71–91 (SANL…IWLF) and 103–123 (GLAM…IHVP). An N-linked (GlcNAc...) asparagine glycan is attached at asparagine 128. The next 8 membrane-spanning stretches (helical) occupy residues 176 to 196 (VTFD…FYAG), 211 to 231 (ILAY…SIMY), 252 to 272 (CLLF…AIFH), 278 to 298 (VELY…AIVL), 324 to 344 (IGIF…TGVV), 372 to 392 (TFLL…FCGI), 414 to 434 (FELL…LTLF), and 436 to 456 (FQNH…IFLG). Lysine 475 is covalently cross-linked (Glycyl lysine isopeptide (Lys-Gly) (interchain with G-Cter in ubiquitin)). A run of 2 helical transmembrane segments spans residues 479-499 (NFQH…ALAI) and 515-535 (LLIV…MLSC).

It belongs to the monovalent cation:proton antiporter 1 (CPA1) transporter (TC 2.A.36) family. As to quaternary structure, homodimer. Interacts with RACK1; regulates the distribution of SLC9A6 between endosomes and the plasma membrane. In terms of processing, ubiquitinated (in vitro). Glycosylated. Ubiquitous. High expression in brain, skeletal muscle, and heart, but is also detected at lower levels in most other tissues.

Its subcellular location is the endosome membrane. It localises to the recycling endosome membrane. The protein resides in the early endosome membrane. The protein localises to the late endosome membrane. It is found in the cell membrane. The catalysed reaction is Na(+)(in) + H(+)(out) = Na(+)(out) + H(+)(in). It catalyses the reaction K(+)(in) + H(+)(out) = K(+)(out) + H(+)(in). Its function is as follows. Endosomal Na(+), K(+)/H(+) antiporter. Mediates the electroneutral exchange of endosomal luminal H(+) for a cytosolic Na(+) or K(+). By facilitating proton efflux, SLC9A6 counteracts the acidity generated by vacuolar (V)-ATPase, thereby limiting luminal acidification. Responsible for alkalizing and maintaining the endosomal pH, and consequently in, e.g., endosome maturation and trafficking of recycling endosomal cargo. Plays a critical role during neurodevelopment by regulating synaptic development and plasticity. Implicated in the maintenance of cell polarity in a manner that is dependent on its ability to modulate intravesicular pH. Regulates intracelular pH in some specialized cells, osteoclasts and stereocilia where this transporter localizes to the plasma membrane. The sequence is that of Sodium/hydrogen exchanger 6 from Homo sapiens (Human).